A 139-amino-acid chain; its full sequence is D-ribose pyranase (139 aa).

The active-site Proton donor is His-20. Substrate is bound by residues Asp-28, His-106, and 128–130 (YAN).

This sequence belongs to the RbsD / FucU family. RbsD subfamily. As to quaternary structure, homodecamer.

The protein resides in the cytoplasm. The enzyme catalyses beta-D-ribopyranose = beta-D-ribofuranose. Its pathway is carbohydrate metabolism; D-ribose degradation; D-ribose 5-phosphate from beta-D-ribopyranose: step 1/2. Catalyzes the interconversion of beta-pyran and beta-furan forms of D-ribose. The polypeptide is D-ribose pyranase (Shewanella pealeana (strain ATCC 700345 / ANG-SQ1)).